The following is a 362-amino-acid chain: MTNYNFSAGPGVLPTPVLTKIKNEFIKNEFTHMSIIEISHRSTQFEEIINSAEERLRDLMNISDDYGVAFIQGGGSTQFEMLPLNFANNKNRIAVLDSGNFASKAAQAAVTIGKQATILDSSKVDHYHHLPMLSTDFNADEYDYLHLTTNNTIEGATYHQSILPKTVGRLTADMSSNILAEPYDVNDFDAIFAGAQKNLGPAGVTVAIVKKDWLKEQNIENVGSMLRYQNYLDKHSMYNTPPVFSIYALNLVLEWVQEQGGVDSMYAQNIEKSSKLYDYLDNSTFYHALVDESARSLTNVVFTTADLERDQAIAKDATKEGLFNLSGHRSVGGFRASLYNAQPIEAVDALITFLKKAENNYK.

L-glutamate is bound at residue Arg41. Pyridoxal 5'-phosphate is bound by residues 75–76 (GS), Phe101, Thr152, Asp173, and Gln196. The residue at position 197 (Lys197) is an N6-(pyridoxal phosphate)lysine. 239–240 (NT) lines the pyridoxal 5'-phosphate pocket.

This sequence belongs to the class-V pyridoxal-phosphate-dependent aminotransferase family. SerC subfamily. As to quaternary structure, homodimer. Requires pyridoxal 5'-phosphate as cofactor.

The protein localises to the cytoplasm. It catalyses the reaction O-phospho-L-serine + 2-oxoglutarate = 3-phosphooxypyruvate + L-glutamate. It carries out the reaction 4-(phosphooxy)-L-threonine + 2-oxoglutarate = (R)-3-hydroxy-2-oxo-4-phosphooxybutanoate + L-glutamate. The protein operates within amino-acid biosynthesis; L-serine biosynthesis; L-serine from 3-phospho-D-glycerate: step 2/3. Its function is as follows. Catalyzes the reversible conversion of 3-phosphohydroxypyruvate to phosphoserine and of 3-hydroxy-2-oxo-4-phosphonooxybutanoate to phosphohydroxythreonine. In Leuconostoc mesenteroides subsp. mesenteroides (strain ATCC 8293 / DSM 20343 / BCRC 11652 / CCM 1803 / JCM 6124 / NCDO 523 / NBRC 100496 / NCIMB 8023 / NCTC 12954 / NRRL B-1118 / 37Y), this protein is Phosphoserine aminotransferase.